The primary structure comprises 159 residues: Small heat shock protein hspM (159 aa).

The sHSP domain occupies 1 to 159 (MFVLNFELAG…LSNNIKIQIN (159 aa)). The segment at 35 to 101 (MNNNNKNNLQ…NNNNKSSKTN (67 aa)) is disordered. Low complexity-rich tracts occupy residues 36–46 (NNNNKNNLQIN) and 61–95 (SSSS…NNNN).

This sequence belongs to the small heat shock protein (HSP20) family.

This Dictyostelium discoideum (Social amoeba) protein is Small heat shock protein hspM (hspM).